A 617-amino-acid chain; its full sequence is Translation initiation factor IF-2 (617 aa).

A compositionally biased stretch (basic residues) spans 1–11; the sequence is MSKHKPRHFQK. The disordered stretch occupies residues 1–25; that stretch reads MSKHKPRHFQKNKFDNRAKTSAKQQ. In terms of domain architecture, tr-type G spans 119-288; it reads PRPPIVTIMG…ILLVAEVEDY (170 aa). The tract at residues 128 to 135 is G1; the sequence is GHVDHGKT. 128–135 provides a ligand contact to GTP; it reads GHVDHGKT. The interval 153–157 is G2; that stretch reads GITQK. The segment at 175-178 is G3; that stretch reads DTPG. Residues 175–179 and 229–232 each bind GTP; these read DTPGH and NKMD. Residues 229–232 are G4; it reads NKMD. Positions 265–267 are G5; sequence SAL.

The protein belongs to the TRAFAC class translation factor GTPase superfamily. Classic translation factor GTPase family. IF-2 subfamily.

Its subcellular location is the cytoplasm. Its function is as follows. One of the essential components for the initiation of protein synthesis. Protects formylmethionyl-tRNA from spontaneous hydrolysis and promotes its binding to the 30S ribosomal subunits. Also involved in the hydrolysis of GTP during the formation of the 70S ribosomal complex. The protein is Translation initiation factor IF-2 (infB) of Mycoplasma pneumoniae (strain ATCC 29342 / M129 / Subtype 1) (Mycoplasmoides pneumoniae).